A 67-amino-acid polypeptide reads, in one-letter code: Probable tautomerase K2 (67 aa).

Pro2 acts as the Proton acceptor; via imino nitrogen in catalysis.

It belongs to the 4-oxalocrotonate tautomerase family.

This Dickeya dadantii (strain 3937) (Erwinia chrysanthemi (strain 3937)) protein is Probable tautomerase K2.